The following is a 198-amino-acid chain: Leucine-rich melanocyte differentiation-associated protein (198 aa).

4 LRR repeats span residues Glu2 to Ser22, Ser26 to Pro47, Arg48 to Leu69, and Ala75 to Glu95. Residues Lys96–Arg134 enclose the LRRCT domain.

In terms of tissue distribution, in the embryo, expressed in melanoblasts. In the fetus, expressed in melanocytes. Not detected in retinal pigment epithelial cells.

In terms of biological role, required for melanocyte differentiation. This Homo sapiens (Human) protein is Leucine-rich melanocyte differentiation-associated protein.